The sequence spans 147 residues: AP-2 complex subunit sigma (147 aa).

The protein belongs to the adaptor complexes small subunit family. In terms of assembly, adaptor protein complex 2 (AP-2) is a heterotetramer composed of two large adaptins (alpha-type subunit APL3 and beta-type subunit APL1), a medium chain (mu-type subunit APM4) and a small adaptin (sigma-type subunit APS2). Interacts with APL1.

The protein localises to the cell membrane. It localises to the membrane. Its subcellular location is the coated pit. Component of the adaptor complexes which link clathrin to receptors in coated vesicles. Clathrin-associated protein complexes are believed to interact with the cytoplasmic tails of membrane proteins, leading to their selection and concentration. This is AP-2 complex subunit sigma (APS2) from Saccharomyces cerevisiae (strain ATCC 204508 / S288c) (Baker's yeast).